The primary structure comprises 560 residues: DNA ligase B (560 aa).

Residue lysine 124 is the N6-AMP-lysine intermediate of the active site.

Belongs to the NAD-dependent DNA ligase family. LigB subfamily.

The enzyme catalyses NAD(+) + (deoxyribonucleotide)n-3'-hydroxyl + 5'-phospho-(deoxyribonucleotide)m = (deoxyribonucleotide)n+m + AMP + beta-nicotinamide D-nucleotide.. Its function is as follows. Catalyzes the formation of phosphodiester linkages between 5'-phosphoryl and 3'-hydroxyl groups in double-stranded DNA using NAD as a coenzyme and as the energy source for the reaction. This is DNA ligase B from Escherichia coli (strain SMS-3-5 / SECEC).